Reading from the N-terminus, the 504-residue chain is L-carnitine/gamma-butyrobetaine antiporter (504 aa).

Transmembrane regions (helical) follow at residues 8–28 (AGIE…LCWL), 51–71 (WGWA…WLVF), 92–112 (IFMM…SIEI), 143–163 (GPLP…FFFV), 195–215 (FYLV…TPLV), 231–251 (LDAI…AFGL), 263–283 (TYLS…SFIV), 315–335 (AWTV…SIFL), 347–367 (LCLG…TYSG), 403–423 (LSTA…VTLI), 446–466 (LLVR…LLAL), and 475–495 (AIIA…LSFI).

This sequence belongs to the BCCT transporter (TC 2.A.15) family. CaiT subfamily. In terms of assembly, homotrimer.

It is found in the cell inner membrane. It carries out the reaction 4-(trimethylamino)butanoate(in) + (R)-carnitine(out) = 4-(trimethylamino)butanoate(out) + (R)-carnitine(in). Its pathway is amine and polyamine metabolism; carnitine metabolism. Functionally, catalyzes the exchange of L-carnitine for gamma-butyrobetaine. This chain is L-carnitine/gamma-butyrobetaine antiporter, found in Proteus sp. (strain LE138).